Consider the following 396-residue polypeptide: Elongation factor Tu 1 (396 aa).

Residues 10–206 (KPHINVGTIG…VLDSYIPEPQ (197 aa)) form the tr-type G domain. Positions 19–26 (GHVDHGKT) are G1. Position 19-26 (19-26 (GHVDHGKT)) interacts with GTP. Threonine 26 contacts Mg(2+). A G2 region spans residues 60-64 (GITIN). The G3 stretch occupies residues 81–84 (DCPG). GTP is bound by residues 81-85 (DCPGH) and 136-139 (NKAD). Residues 136–139 (NKAD) are G4. The tract at residues 174-176 (SAL) is G5.

Belongs to the TRAFAC class translation factor GTPase superfamily. Classic translation factor GTPase family. EF-Tu/EF-1A subfamily. As to quaternary structure, monomer.

The protein resides in the cytoplasm. It carries out the reaction GTP + H2O = GDP + phosphate + H(+). Functionally, GTP hydrolase that promotes the GTP-dependent binding of aminoacyl-tRNA to the A-site of ribosomes during protein biosynthesis. In Nitrosomonas eutropha (strain DSM 101675 / C91 / Nm57), this protein is Elongation factor Tu 1.